A 188-amino-acid polypeptide reads, in one-letter code: Photosystem I assembly protein Ycf4 (188 aa).

2 helical membrane passes run 28–48 (WATVITIGGTGFFLAGLSSYL) and 68–88 (IAIGFYGVAALLLAIYLWATI).

This sequence belongs to the Ycf4 family.

The protein localises to the cellular thylakoid membrane. Seems to be required for the assembly of the photosystem I complex. This Cyanothece sp. (strain PCC 7425 / ATCC 29141) protein is Photosystem I assembly protein Ycf4.